The chain runs to 205 residues: Non-structural protein NS3 (205 aa).

A disordered region spans residues Gly177 to Gly205. The span at Ala196–Gly205 shows a compositional bias: gly residues.

This sequence belongs to the orbivirus NS3 family.

In terms of biological role, may play a role in the release of virions from infected cells. This chain is Non-structural protein NS3 (Segment-10), found in Broadhaven virus (BRD).